A 173-amino-acid polypeptide reads, in one-letter code: Transcription factor E (173 aa).

In terms of domain architecture, HTH TFE/IIEalpha-type spans 3-88; that stretch reads NDPLVQEVLF…TWLPTLEKLP (86 aa).

This sequence belongs to the TFE family. As to quaternary structure, monomer. Interaction with RNA polymerase subunits RpoF and RpoE is necessary for Tfe stimulatory transcription activity. Able to interact with RNA polymerase in the absence of Tbp or DNA promoter. Interacts both with the preinitiation and elongation complexes.

Transcription factor that plays a role in the activation of archaeal genes transcribed by RNA polymerase. Facilitates transcription initiation by enhancing TATA-box recognition by TATA-box-binding protein (Tbp), and transcription factor B (Tfb) and RNA polymerase recruitment. Not absolutely required for transcription in vitro, but particularly important in cases where Tbp or Tfb function is not optimal. It dynamically alters the nucleic acid-binding properties of RNA polymerases by stabilizing the initiation complex and destabilizing elongation complexes. Seems to translocate with the RNA polymerase following initiation and acts by binding to the non template strand of the transcription bubble in elongation complexes. The chain is Transcription factor E (tfe) from Methanocaldococcus jannaschii (strain ATCC 43067 / DSM 2661 / JAL-1 / JCM 10045 / NBRC 100440) (Methanococcus jannaschii).